A 513-amino-acid polypeptide reads, in one-letter code: MEGRGFSGLYKNSSEELFLKTVMESPIGMPVPTMEMLGFKTVSQSFRTDSEELFKRWLTNDQEGYNSSSMGLNSRLSKRISTEIANMSNQQHIGVASEGRNNDKSCLQNNFLANDVSSDFNFPIRDPVDRELQSSNLFLAKAWFITDQRMTRSRSSELRRRYTEMQNSQAPQGLDSMFMVPEHDTNTIKEELANFNGFDYLSMCELPSQKGTFMSPSNSSSSTFNTHQLVDVDKVSSCVSMLKGTLQRKKLECQVEKEAAEDGLNEIFCIREPLFQSAFNEEESWNQQKLVNVQGDFTDQVNDPGVMQTLEGTTNFVLDGFANQTNQIQGRTASGEPSQSESSAAAPVISSGLDACEGPSNSNQTLGDSSWKQVGESTQNKVRGVREQIMDNLKDDRKRKSLERYGSVTSAVSDGKMDNTKKRRVERSRKMAEAKERNLTPTIPSDMQAILKRCENLEKEVRSLKLNLSFMNRKDSEQTKQIEDLQKQNEDLADEKERLLEEIERILSETGKI.

Disordered regions lie at residues 329-380 (QGRT…STQN) and 395-435 (DDRK…AEAK). Residues 333–347 (ASGEPSQSESSAAAP) are compositionally biased toward low complexity. Positions 359–380 (PSNSNQTLGDSSWKQVGESTQN) are enriched in polar residues. Short sequence motifs (nuclear localization signal) lie at residues 397–400 (RKRK) and 421–424 (KKRR). A coiled-coil region spans residues 447–513 (MQAILKRCEN…ERILSETGKI (67 aa)).

The protein belongs to the CYCLOPS family. Forms homodimers. Interacts with CCAMK. As to expression, highly expressed in roots. Expressed in root hairs and nodules. Not detected in leaves or flowers.

Its subcellular location is the nucleus. Functionally, involved symbiotic signaling. Required for root infection by symbiotic rhizobia, infection thread (IT) formation, and nodule development. Required for proper induction of early nodulin gene expression. Probably not involved in nodule organogenesis. Involved in arbuscular mycorrhizal (AM) symbiosis. Required for fungal infection of the outer cortical cell layers, and for arbuscule development during the AM symbiosis. Acts downstream of CCAMK. Required for symbiosome formation (i.e. the release of the bacteria from the ITs) and subsequent symbiosome development. Required for the expression of the nodule-specific RPG gene, which controls proper IT growth and is essential for symbiosome formation. Acts upstream of ERN1, a transcriptional regulator required for nodulation. This is Protein CYCLOPS from Medicago truncatula (Barrel medic).